The primary structure comprises 1447 residues: Regulator of G-protein signaling 12 (1447 aa).

A disordered region spans residues 1 to 21 (MFRAGEASKRPLPGPSPPRVR). Residues 22-98 (SVEVARGRAG…GVLHMVIAEG (77 aa)) enclose the PDZ domain. Residues Ser172 and Ser195 each carry the phosphoserine modification. Lys196 participates in a covalent cross-link: Glycyl lysine isopeptide (Lys-Gly) (interchain with G-Cter in SUMO2). The PID domain occupies 228-340 (VAMIVGYLGS…GALRTSCHVF (113 aa)). Disordered regions lie at residues 410–429 (ADAH…IGNF) and 443–482 (LGGS…DPEG). A compositionally biased stretch (polar residues) spans 413–425 (HQNNSTSSNSDSG). Residues 451–464 (GPGGSAWDGVGGRG) are compositionally biased toward gly residues. Arg524 and Arg633 each carry omega-N-methylarginine. The tract at residues 618–652 (NVRKTKEDKKGSKFGRGTGLTQPSQRTSARRSFGR) is disordered. Phosphoserine occurs at positions 661 and 671. An RGS domain is found at 715-832 (SFERLLQDPV…LKSPLYQECI (118 aa)). Positions 843-853 (DSQQVPSSPAS) are enriched in polar residues. Residues 843–941 (DSQQVPSSPA…RESQGSVSSA (99 aa)) form a disordered region. Residues Ser850 and Ser879 each carry the phosphoserine modification. Positions 914–923 (EHGDHADDAL) are enriched in basic and acidic residues. Phosphoserine is present on Ser943. RBD domains are found at residues 962-1032 (KHCC…LEKR) and 1034-1104 (LFRL…LEEK). Basic and acidic residues predominate over residues 1103-1117 (EKDPSRGKASADKQK). Positions 1103-1169 (EKDPSRGKAS…RDPRLSKREE (67 aa)) are disordered. The span at 1122 to 1136 (KQNTAVNSSSRNHSA) shows a compositional bias: polar residues. Over residues 1151-1169 (IKGENGKNARDPRLSKREE) the composition is skewed to basic and acidic residues. The GoLoco domain maps to 1187–1209 (AEEFFELISKAQSNRADDQRGLL). The disordered stretch occupies residues 1240-1447 (GFSKRSATGN…KTSAHHATFV (208 aa)). Polar residues predominate over residues 1244–1258 (RSATGNGRESASQPG). Low complexity-rich tracts occupy residues 1267–1280 (SSDS…SASS) and 1289–1298 (PPGQKSPSGP). Residues 1301–1313 (TPQSPVSLAQEGT) show a composition bias toward polar residues.

As to quaternary structure, interacts with GNAI1. Interacts with GNAI2 and GNAI3; the interactions are GDP-dependent. As to expression, isoform 3 is brain specific.

The protein resides in the nucleus. Its subcellular location is the cytoplasm. It localises to the cell projection. It is found in the dendrite. The protein localises to the synapse. The protein resides in the nucleus matrix. Its function is as follows. Regulates G protein-coupled receptor signaling cascades. Inhibits signal transduction by increasing the GTPase activity of G protein alpha subunits, thereby driving them into their inactive GDP-bound form. Functionally, behaves as a cell cycle-dependent transcriptional repressor, promoting inhibition of S-phase DNA synthesis. This chain is Regulator of G-protein signaling 12 (RGS12), found in Homo sapiens (Human).